The primary structure comprises 281 residues: MKRESYQAEMFNWCEALKDQIQKRGQLDQFEDQIDKMIEALEDDQTTEEDWYKQAAALYRDITESDDTSERRAYVPIGKHVLPKLPYKYSALEPYISRDIMILHHTKHHQSYVDGLNKAESELKKARATKNYDLITHWERELAFHGAGHYLHSIFWFSMHPNGKRRPTGALFQMIDLSFGSYSAFKEHFTQASKKVEGVGWAILVWAPRSGRLEILTAEKHQLFSQWDVIPLLPLDVWEHAYYLQYKNDRASYVDHWWNVVDWREAEKRFEQAKEVVWKLY.

Fe cation-binding residues include histidine 104, histidine 152, aspartate 236, and histidine 240.

Belongs to the iron/manganese superoxide dismutase family. Requires Fe cation as cofactor.

The catalysed reaction is 2 superoxide + 2 H(+) = H2O2 + O2. Its function is as follows. Destroys superoxide anion radicals which are normally produced within the cells and which are toxic to biological systems. The chain is Probable superoxide dismutase [Fe] (sodF) from Bacillus subtilis (strain 168).